The chain runs to 711 residues: Polyribonucleotide nucleotidyltransferase (711 aa).

Residues D486 and D492 each coordinate Mg(2+). The KH domain maps to 553–612; sequence PRIHTIKINPDKIKDVIGKGGSVIRALTEETGTTIEIEDDGTVKIAATDGDKAQHAIRRI. The 69-residue stretch at 622 to 690 folds into the S1 motif domain; it reads GRIYNGKVTR…RQGRVRLSIK (69 aa). A disordered region spans residues 689–711; the sequence is IKEATEQTPSAAAPEAPAAEQGE. Positions 694–711 are enriched in low complexity; the sequence is EQTPSAAAPEAPAAEQGE.

This sequence belongs to the polyribonucleotide nucleotidyltransferase family. As to quaternary structure, component of the RNA degradosome, which is a multiprotein complex involved in RNA processing and mRNA degradation. It depends on Mg(2+) as a cofactor.

It localises to the cytoplasm. It catalyses the reaction RNA(n+1) + phosphate = RNA(n) + a ribonucleoside 5'-diphosphate. Functionally, involved in mRNA degradation. Catalyzes the phosphorolysis of single-stranded polyribonucleotides processively in the 3'- to 5'-direction. This chain is Polyribonucleotide nucleotidyltransferase, found in Klebsiella pneumoniae subsp. pneumoniae (strain ATCC 700721 / MGH 78578).